The following is a 498-amino-acid chain: ATP synthase subunit beta, chloroplastic (498 aa).

172–179 is an ATP binding site; it reads GGAGVGKT.

Belongs to the ATPase alpha/beta chains family. In terms of assembly, F-type ATPases have 2 components, CF(1) - the catalytic core - and CF(0) - the membrane proton channel. CF(1) has five subunits: alpha(3), beta(3), gamma(1), delta(1), epsilon(1). CF(0) has four main subunits: a(1), b(1), b'(1) and c(9-12).

The protein resides in the plastid. It localises to the chloroplast thylakoid membrane. It catalyses the reaction ATP + H2O + 4 H(+)(in) = ADP + phosphate + 5 H(+)(out). Functionally, produces ATP from ADP in the presence of a proton gradient across the membrane. The catalytic sites are hosted primarily by the beta subunits. The polypeptide is ATP synthase subunit beta, chloroplastic (Hyphaene coriacea (Ilala palm)).